The following is a 536-amino-acid chain: Phosphoenolpyruvate carboxykinase (ATP) (536 aa).

Substrate is bound by residues Arg-61, Tyr-195, and Lys-201. Residues Lys-201, His-220, and 236–244 each bind ATP; that span reads GLSGTGKTT. Residues Lys-201 and His-220 each contribute to the Mn(2+) site. Asp-257 contributes to the Mn(2+) binding site. Residues Glu-285, Arg-322, and Thr-447 each contribute to the ATP site. Arg-322 lines the substrate pocket.

The protein belongs to the phosphoenolpyruvate carboxykinase (ATP) family. Mn(2+) is required as a cofactor.

It localises to the cytoplasm. It catalyses the reaction oxaloacetate + ATP = phosphoenolpyruvate + ADP + CO2. It participates in carbohydrate biosynthesis; gluconeogenesis. In terms of biological role, involved in the gluconeogenesis. Catalyzes the conversion of oxaloacetate (OAA) to phosphoenolpyruvate (PEP) through direct phosphoryl transfer between the nucleoside triphosphate and OAA. This chain is Phosphoenolpyruvate carboxykinase (ATP), found in Brucella suis biovar 1 (strain 1330).